Reading from the N-terminus, the 204-residue chain is Peptidyl-tRNA hydrolase (204 aa).

TRNA is bound at residue Tyr14. The active-site Proton acceptor is the His19. Tyr64, Asn66, and Asn112 together coordinate tRNA.

Belongs to the PTH family. In terms of assembly, monomer.

The protein localises to the cytoplasm. The catalysed reaction is an N-acyl-L-alpha-aminoacyl-tRNA + H2O = an N-acyl-L-amino acid + a tRNA + H(+). Functionally, hydrolyzes ribosome-free peptidyl-tRNAs (with 1 or more amino acids incorporated), which drop off the ribosome during protein synthesis, or as a result of ribosome stalling. Its function is as follows. Catalyzes the release of premature peptidyl moieties from peptidyl-tRNA molecules trapped in stalled 50S ribosomal subunits, and thus maintains levels of free tRNAs and 50S ribosomes. This is Peptidyl-tRNA hydrolase from Nitrobacter hamburgensis (strain DSM 10229 / NCIMB 13809 / X14).